We begin with the raw amino-acid sequence, 409 residues long: MSSSVYITVELVIAVLAILGNVLVCWAVWINSNLQNVTNYFVVSLAAADIAVGVLAIPFAITISTGFCAACHGCLFFACFVLVLTQSSIFSLLTITIDRYIAIRIPLRYNGLVTCTRAKGIIAICWVLSFAIGLTPMLGWNNCSQPKGDKNHSESCDEGQVTCLFEDVVPMNYMVYYNFFAFVLVPLLLMLGIYLRIFLAARRQLKQMESQPLPGERTRSTLQKEVHPAKSLAIIVGLFALCCLPLNIINCFTFFCPECDHAPPWLMYLTIILSHGNSVVNPLIYAYRIREFRQTFRKIIRSHILRRRELFKAGGTSARASAAHSPEGEQVSLRLNGHPPGVWANGSALRPEQRPNGYVLGLVSGRSAQRSHGDASLSDVELLSHEHKGTCPESPSLEDPPAHGGAGVS.

The Extracellular portion of the chain corresponds to 1–4; sequence MSSS. Residues 5 to 29 traverse the membrane as a helical segment; sequence VYITVELVIAVLAILGNVLVCWAVW. At 30-39 the chain is on the cytoplasmic side; sequence INSNLQNVTN. A helical transmembrane segment spans residues 40–63; it reads YFVVSLAAADIAVGVLAIPFAITI. Over 64–74 the chain is Extracellular; it reads STGFCAACHGC. Cystine bridges form between Cys68/Cys156, Cys71/Cys143, and Cys74/Cys163. A helical transmembrane segment spans residues 75-97; it reads LFFACFVLVLTQSSIFSLLTITI. The Cytoplasmic segment spans residues 98-117; sequence DRYIAIRIPLRYNGLVTCTR. A helical transmembrane segment spans residues 118–140; the sequence is AKGIIAICWVLSFAIGLTPMLGW. Over 141 to 170 the chain is Extracellular; that stretch reads NNCSQPKGDKNHSESCDEGQVTCLFEDVVP. Asn142 and Asn151 each carry an N-linked (GlcNAc...) asparagine glycan. Glu166 contributes to the adenosine binding site. The helical transmembrane segment at 171 to 195 threads the bilayer; the sequence is MNYMVYYNFFAFVLVPLLLMLGIYL. Residues 196 to 231 lie on the Cytoplasmic side of the membrane; that stretch reads RIFLAARRQLKQMESQPLPGERTRSTLQKEVHPAKS. A helical transmembrane segment spans residues 232-255; it reads LAIIVGLFALCCLPLNIINCFTFF. Asn250 is a binding site for adenosine. A disulfide bond links Cys256 and Cys259. Topologically, residues 256-263 are extracellular; sequence CPECDHAP. A helical membrane pass occupies residues 264–287; that stretch reads PWLMYLTIILSHGNSVVNPLIYAY. Residues Ser274 and His275 each coordinate adenosine. The Cytoplasmic portion of the chain corresponds to 288–409; the sequence is RIREFRQTFR…PPAHGGAGVS (122 aa). Disordered stretches follow at residues 316–336 and 369–409; these read TSAR…LRLN and QRSH…AGVS.

The protein belongs to the G-protein coupled receptor 1 family. Interacts (via cytoplasmic C-terminal domain) with USP4; the interaction is direct. May interact with DRD4. Interacts with NECAB2. Interacts (via cytoplasmic C-terminal domain) with GAS2L2; interaction enhances receptor-mediated adenylyl cyclase activity. Post-translationally, ubiquitinated. Deubiquitinated by USP4; leading to stabilization and expression at the cell surface.

The protein localises to the cell membrane. Receptor for adenosine. The activity of this receptor is mediated by G proteins which activate adenylyl cyclase. The protein is Adenosine receptor A2a (ADORA2A) of Cavia porcellus (Guinea pig).